The sequence spans 123 residues: Putative membrane protein insertion efficiency factor (123 aa).

A disordered region spans residues 1 to 23; that stretch reads MGSCGGKHTGKGAPKPYSRNFTD.

It belongs to the UPF0161 family.

The protein resides in the cell inner membrane. Functionally, could be involved in insertion of integral membrane proteins into the membrane. This chain is Putative membrane protein insertion efficiency factor, found in Brucella abortus (strain 2308).